We begin with the raw amino-acid sequence, 99 residues long: UPF0751 protein BCE_A0020 (99 aa).

It belongs to the UPF0751 family.

The protein is UPF0751 protein BCE_A0020 of Bacillus cereus (strain ATCC 10987 / NRS 248).